Consider the following 167-residue polypeptide: MRIGYGFDIHAFGSIKPLIIGGVQIPYNKGLIAHSNGDLLIHSLIDALLGATAMGDIGTFFPSEDKKYKNINSRILLKYIWKRIYLKNYRISNIDITIITETPKILSYIFLMRSNIASDLNIKIEKISVKSTSSKMIGCIGRKEGIACQSLVMLVKSKNTDRKNNII.

A divalent metal cation contacts are provided by D8 and H10. 4-CDP-2-C-methyl-D-erythritol 2-phosphate is bound by residues 8 to 10 (DIH) and 34 to 35 (HS). Residue H42 participates in a divalent metal cation binding. 4-CDP-2-C-methyl-D-erythritol 2-phosphate-binding positions include 56–58 (DIG) and R142.

It belongs to the IspF family. Homotrimer. It depends on a divalent metal cation as a cofactor.

It carries out the reaction 4-CDP-2-C-methyl-D-erythritol 2-phosphate = 2-C-methyl-D-erythritol 2,4-cyclic diphosphate + CMP. Its pathway is isoprenoid biosynthesis; isopentenyl diphosphate biosynthesis via DXP pathway; isopentenyl diphosphate from 1-deoxy-D-xylulose 5-phosphate: step 4/6. Involved in the biosynthesis of isopentenyl diphosphate (IPP) and dimethylallyl diphosphate (DMAPP), two major building blocks of isoprenoid compounds. Catalyzes the conversion of 4-diphosphocytidyl-2-C-methyl-D-erythritol 2-phosphate (CDP-ME2P) to 2-C-methyl-D-erythritol 2,4-cyclodiphosphate (ME-CPP) with a corresponding release of cytidine 5-monophosphate (CMP). This is 2-C-methyl-D-erythritol 2,4-cyclodiphosphate synthase from Buchnera aphidicola subsp. Schizaphis graminum (strain Sg).